Consider the following 661-residue polypeptide: UvrABC system protein B (661 aa).

The Helicase ATP-binding domain maps to 25-182; sequence AGLSSKKRSQ…NDLINLQYER (158 aa). 38–45 is a binding site for ATP; sequence GITGSGKT. Residues 91–114 carry the Beta-hairpin motif; the sequence is YYDYYQPEAYIARTDTFIEKDSSI. Positions 430–592 constitute a Helicase C-terminal domain; sequence QIEDLISEIQ…IIPKTINRTI (163 aa). The UVR domain maps to 621–656; the sequence is KTHIDKLKKEMLKAASNLEFEQAAKLRDQLKTLEEA.

It belongs to the UvrB family. In terms of assembly, forms a heterotetramer with UvrA during the search for lesions. Interacts with UvrC in an incision complex.

It is found in the cytoplasm. In terms of biological role, the UvrABC repair system catalyzes the recognition and processing of DNA lesions. A damage recognition complex composed of 2 UvrA and 2 UvrB subunits scans DNA for abnormalities. Upon binding of the UvrA(2)B(2) complex to a putative damaged site, the DNA wraps around one UvrB monomer. DNA wrap is dependent on ATP binding by UvrB and probably causes local melting of the DNA helix, facilitating insertion of UvrB beta-hairpin between the DNA strands. Then UvrB probes one DNA strand for the presence of a lesion. If a lesion is found the UvrA subunits dissociate and the UvrB-DNA preincision complex is formed. This complex is subsequently bound by UvrC and the second UvrB is released. If no lesion is found, the DNA wraps around the other UvrB subunit that will check the other stand for damage. This Rickettsia massiliae (strain Mtu5) protein is UvrABC system protein B.